The following is a 157-amino-acid chain: Transcription initiation factor IIA large subunit (157 aa).

It belongs to the TFIIA subunit 1 family. In terms of assembly, TFIIA is a heterodimer of the large subunit and the small subunit gamma.

It localises to the nucleus. Functionally, TFIIA is a component of the transcription machinery of RNA polymerase II and plays an important role in transcriptional activation. This chain is Transcription initiation factor IIA large subunit (TOA1), found in Encephalitozoon cuniculi (strain GB-M1) (Microsporidian parasite).